Here is a 238-residue protein sequence, read N- to C-terminus: Ribosomal RNA small subunit methyltransferase G (238 aa).

S-adenosyl-L-methionine-binding positions include G78, F83, A129 to E130, and R148. A disordered region spans residues E216–K238.

This sequence belongs to the methyltransferase superfamily. RNA methyltransferase RsmG family.

Its subcellular location is the cytoplasm. Its function is as follows. Specifically methylates the N7 position of a guanine in 16S rRNA. This Lactococcus lactis subsp. lactis (strain IL1403) (Streptococcus lactis) protein is Ribosomal RNA small subunit methyltransferase G.